A 442-amino-acid chain; its full sequence is Cyclic AMP receptor-like protein B (442 aa).

Residues methionine 1–histidine 16 lie on the Extracellular side of the membrane. A helical transmembrane segment spans residues leucine 17–isoleucine 37. Topologically, residues threonine 38–tyrosine 219 are cytoplasmic. The interval tyrosine 83–isoleucine 166 is disordered. The segment covering glutamine 91 to glutamine 103 has biased composition (low complexity). Residues isoleucine 112–tyrosine 122 show a composition bias toward polar residues. The span at serine 123–serine 144 shows a compositional bias: low complexity. The span at tyrosine 145 to isoleucine 166 shows a compositional bias: polar residues. The helical transmembrane segment at leucine 220–phenylalanine 240 threads the bilayer. Residues asparagine 241–arginine 255 lie on the Extracellular side of the membrane. The chain crosses the membrane as a helical span at residues valine 256–leucine 276. Over leucine 277–arginine 289 the chain is Cytoplasmic. The chain crosses the membrane as a helical span at residues phenylalanine 290–phenylalanine 310. At serine 311–leucine 334 the chain is on the extracellular side. The helical transmembrane segment at tyrosine 335–isoleucine 355 threads the bilayer. Topologically, residues tyrosine 356–serine 382 are cytoplasmic. A helical transmembrane segment spans residues phenylalanine 383 to leucine 403. Topologically, residues tyrosine 404 to proline 410 are extracellular. A helical transmembrane segment spans residues phenylalanine 411–alanine 431. Topologically, residues tyrosine 432 to lysine 442 are cytoplasmic.

This sequence belongs to the G-protein coupled receptor 5 family.

It is found in the membrane. In terms of biological role, receptor for cAMP. The protein is Cyclic AMP receptor-like protein B (crlB) of Dictyostelium discoideum (Social amoeba).